We begin with the raw amino-acid sequence, 172 residues long: Putative phosphoesterase BCG9842_B4061 (172 aa).

Residue histidine 34 is the Proton donor of the active site. 2 consecutive short sequence motifs (HXTX) follow at residues 34–37 (HITL) and 115–118 (HLTI). The active-site Proton acceptor is the histidine 115.

The protein belongs to the 2H phosphoesterase superfamily. YjcG family.

This chain is Putative phosphoesterase BCG9842_B4061, found in Bacillus cereus (strain G9842).